Reading from the N-terminus, the 601-residue chain is MANIAESAVLVSSASSAQAVAKLTQVRGPTSGFDKAQHIIGSYSTMGFQATNYGLARSIAQRMIRKQPPSKVYQIKDGKYVLVPPDVGEDGKTLQQEHVYPNLFMGVTANLMGTGCREAVRFLVQEGVVHRSLEASAPASADGTDDQLMFARLKREYVETYGGPPHPDEEIPRAHSFLCAIVVSGGGVEHDLRRACTAYTLHHYASEAQGHVSSTVSSEATAPPKGLQQRAEKPLGTRAAAGTAKPARFGNVEYPRQGSTGSELFDCLMRTFVQRLCARQARLRAAAMAKPIPDKYDDVCSWSVTPSEVWALCGLWLVDMLAEALGAVRSCTSRLTSGSAVGTAESVTANGKGPEADRDAHIATSASYRAEALARARTTVVYWAALQQVSLFSPSFVDGDITSYLLPTPAPAARPAHRKGGPVADENAGNSKELKRSRKASSSSSTSATAVKVKPPVVERLQVDLVRDVYSINKLAMLSKKTGMLICGGGVVKHHVCNANLMRNGADFTIILSNGQEFDGSDAGAKPEEALSWGKVRMEGAFVKVYGEVSTYLPLLLAEVFVPAVRQRRATDDAQPRRKRSSRGARPPQDVSGHSHLCRGE.

Residues 109-113 and 184-186 each bind NAD(+); these read ANLMG and SGG. 189 to 190 lines the spermidine pocket; the sequence is EH. The tract at residues 210–242 is disordered; that stretch reads GHVSSTVSSEATAPPKGLQQRAEKPLGTRAAAG. Residues 211-220 show a composition bias toward polar residues; it reads HVSSTVSSEA. Asp-398 serves as a coordination point for NAD(+). The tract at residues 411–451 is disordered; it reads PAARPAHRKGGPVADENAGNSKELKRSRKASSSSSTSATAV. The segment covering 440–451 has biased composition (low complexity); it reads ASSSSSTSATAV. Gly-489 serves as a coordination point for NAD(+). His-494 provides a ligand contact to spermidine. 514–515 contacts NAD(+); the sequence is NG. Spermidine-binding positions include 520–522 and 529–535; these read GSD and EALSWGK. The active-site Nucleophile is Lys-535. 548-549 lines the NAD(+) pocket; sequence EV. Residues 568 to 601 form a disordered region; the sequence is RRATDDAQPRRKRSSRGARPPQDVSGHSHLCRGE.

This sequence belongs to the deoxyhypusine synthase family. In terms of assembly, homodimer. NAD(+) serves as cofactor.

It carries out the reaction [eIF5A protein]-L-lysine + spermidine = [eIF5A protein]-deoxyhypusine + propane-1,3-diamine. It participates in protein modification; eIF5A hypusination. N1-guanyl-1,7-diaminoheptane has a small inhibitory effect on activity. Functionally, catalyzes the NAD-dependent oxidative cleavage of spermidine and the subsequent transfer of the butylamine moiety of spermidine to the epsilon-amino group of a specific lysine residue of the eIF-5A precursor protein to form the intermediate deoxyhypusine residue. The sequence is that of Deoxyhypusine synthase from Leishmania donovani.